Reading from the N-terminus, the 201-residue chain is 3-isopropylmalate dehydratase small subunit (201 aa).

It belongs to the LeuD family. LeuD type 1 subfamily. Heterodimer of LeuC and LeuD.

The catalysed reaction is (2R,3S)-3-isopropylmalate = (2S)-2-isopropylmalate. It functions in the pathway amino-acid biosynthesis; L-leucine biosynthesis; L-leucine from 3-methyl-2-oxobutanoate: step 2/4. Functionally, catalyzes the isomerization between 2-isopropylmalate and 3-isopropylmalate, via the formation of 2-isopropylmaleate. This chain is 3-isopropylmalate dehydratase small subunit, found in Rhodopseudomonas palustris (strain ATCC BAA-98 / CGA009).